Consider the following 480-residue polypeptide: Coronin-2B (480 aa).

WD repeat units lie at residues 29–77 (HCFD…GRIE), 78–127 (PNYP…RNMT), 128–170 (EALL…LDVG), 171–212 (EPVK…PRSG), 213–259 (RVLQ…EDLS), 260–305 (MPLI…TEKP), and 306–345 (YLSY…KLVT). Residues 436-479 (NELLRMFFRQQDEIRRLKEELAQKDIRIRQLQLELKNLRNSPKN) are a coiled coil.

It belongs to the WD repeat coronin family. In terms of assembly, binds to F-actin and to vinculin. Expressed predominantly in brain.

The protein localises to the cytoplasm. It is found in the cytoskeleton. May play a role in the reorganization of neuronal actin structure. This chain is Coronin-2B (CORO2B), found in Homo sapiens (Human).